The sequence spans 157 residues: Phosphopantetheine adenylyltransferase (157 aa).

Thr8 serves as a coordination point for substrate. Residues 8–9 (TF) and His16 each bind ATP. Residues Lys40, Thr72, and Arg86 each contribute to the substrate site. Residues 87-89 (GLR), Glu97, and 122-128 (YSFLSSS) contribute to the ATP site.

Belongs to the bacterial CoaD family. Homohexamer. Requires Mg(2+) as cofactor.

The protein resides in the cytoplasm. It catalyses the reaction (R)-4'-phosphopantetheine + ATP + H(+) = 3'-dephospho-CoA + diphosphate. Its pathway is cofactor biosynthesis; coenzyme A biosynthesis; CoA from (R)-pantothenate: step 4/5. Functionally, reversibly transfers an adenylyl group from ATP to 4'-phosphopantetheine, yielding dephospho-CoA (dPCoA) and pyrophosphate. The polypeptide is Phosphopantetheine adenylyltransferase (Prochlorococcus marinus (strain MIT 9312)).